A 421-amino-acid polypeptide reads, in one-letter code: Glutamyl-tRNA reductase (421 aa).

Substrate-binding positions include 49 to 52, Ser-109, 114 to 116, and Gln-120; these read TCNR and EPQ. The active-site Nucleophile is the Cys-50. Residue 189–194 participates in NADP(+) binding; sequence GAGKMS.

It belongs to the glutamyl-tRNA reductase family. As to quaternary structure, homodimer.

It carries out the reaction (S)-4-amino-5-oxopentanoate + tRNA(Glu) + NADP(+) = L-glutamyl-tRNA(Glu) + NADPH + H(+). It participates in porphyrin-containing compound metabolism; protoporphyrin-IX biosynthesis; 5-aminolevulinate from L-glutamyl-tRNA(Glu): step 1/2. Catalyzes the NADPH-dependent reduction of glutamyl-tRNA(Glu) to glutamate 1-semialdehyde (GSA). The protein is Glutamyl-tRNA reductase of Solibacter usitatus (strain Ellin6076).